A 925-amino-acid chain; its full sequence is Isoleucine--tRNA ligase (925 aa).

The short motif at 57–67 is the 'HIGH' region element; it reads PYANGDIHIGH. Residue Glu-553 coordinates L-isoleucyl-5'-AMP. The 'KMSKS' region motif lies at 594 to 598; sequence KMSKS. Position 597 (Lys-597) interacts with ATP. Cys-889, Cys-892, Cys-909, and Cys-912 together coordinate Zn(2+).

It belongs to the class-I aminoacyl-tRNA synthetase family. IleS type 1 subfamily. Monomer. Zn(2+) serves as cofactor.

It is found in the cytoplasm. It carries out the reaction tRNA(Ile) + L-isoleucine + ATP = L-isoleucyl-tRNA(Ile) + AMP + diphosphate. In terms of biological role, catalyzes the attachment of isoleucine to tRNA(Ile). As IleRS can inadvertently accommodate and process structurally similar amino acids such as valine, to avoid such errors it has two additional distinct tRNA(Ile)-dependent editing activities. One activity is designated as 'pretransfer' editing and involves the hydrolysis of activated Val-AMP. The other activity is designated 'posttransfer' editing and involves deacylation of mischarged Val-tRNA(Ile). In Brevibacillus brevis (strain 47 / JCM 6285 / NBRC 100599), this protein is Isoleucine--tRNA ligase.